Consider the following 209-residue polypeptide: Geminin (209 aa).

A disordered region spans residues 1-79 (MNPSMKQKQE…PESSENKNLG (79 aa)). A compositionally biased stretch (basic and acidic residues) spans 7–16 (QKQEEIKENI). The residue at position 27 (K27) is an N6-acetyllysine. 5 positions are modified to phosphoserine: S34, S36, S49, S63, and S64. The segment at 82–161 (TQESFDLMIK…AELIERLNGE (80 aa)) is necessary and sufficient for interaction with IDAS and CDT1. Positions 94 to 144 (PSSQYWKEVAEKRRKALYEALKENEKLHKEIEQKDNEIARLKKENKELAEV) form a coiled coil. The segment at 164–209 (DNFESLDNQEFDSEEETVEDSLVEDSEIGTCAEGTVSSSTDAKPCI) is disordered. A homeodomain binding region spans residues 170–190 (DNQEFDSEEETVEDSLVEDSE). Over residues 170 to 190 (DNQEFDSEEETVEDSLVEDSE) the composition is skewed to acidic residues. The residue at position 184 (S184) is a Phosphoserine; by CK2. The span at 198–209 (TVSSSTDAKPCI) shows a compositional bias: polar residues.

This sequence belongs to the geminin family. In terms of assembly, homotetramer. Interacts with CDT1; this inhibits binding of the MCM complex to origins of replication. The complex with CDT1 exists in two forms, a 'permissive' heterotrimer and an 'inhibitory' heterohexamer. Interacts (via coiled-coil domain) with IDAS (via coiled-coil domain); this targets GMNN to the nucleus. The heterodimer formed by GMNN and MCIDAS has much lower affinity for CDT1 than the GMNN homodimer. Interacts with a subset of Hox proteins, affinity increasing from anterior to posterior types, the strongest interaction being with HOXB1, HOXC9 and HOXD10. Interacts with LRWD1 from G1/S to mitosis. In terms of processing, phosphorylated during mitosis. Phosphorylation at Ser-184 by CK2 results in enhanced binding to Hox proteins and more potent inhibitory effect on Hox transcriptional activity.

The protein localises to the cytoplasm. The protein resides in the nucleus. In terms of biological role, inhibits DNA replication by preventing the incorporation of MCM complex into pre-replication complex (pre-RC). It is degraded during the mitotic phase of the cell cycle. Its destruction at the metaphase-anaphase transition permits replication in the succeeding cell cycle. Inhibits histone acetyltransferase activity of KAT7/HBO1 in a CDT1-dependent manner, inhibiting histone H4 acetylation and DNA replication licensing. Inhibits the transcriptional activity of a subset of Hox proteins, enrolling them in cell proliferative control. The chain is Geminin (GMNN) from Homo sapiens (Human).